The following is a 311-amino-acid chain: Oxygen-dependent coproporphyrinogen-III oxidase (311 aa).

Ser-93 provides a ligand contact to substrate. A divalent metal cation-binding residues include His-97 and His-107. Residue His-107 is the Proton donor of the active site. A substrate-binding site is contributed by 109 to 111 (NVR). The a divalent metal cation site is built by His-153 and His-184. Residues 252–287 (YVEFNLVFDRGTLFGLQSGGRTESILMSLPPVVKWR) form an important for dimerization region. 270–272 (GGR) contributes to the substrate binding site.

It belongs to the aerobic coproporphyrinogen-III oxidase family. Homodimer. Requires a divalent metal cation as cofactor.

The protein localises to the cytoplasm. It catalyses the reaction coproporphyrinogen III + O2 + 2 H(+) = protoporphyrinogen IX + 2 CO2 + 2 H2O. It functions in the pathway porphyrin-containing compound metabolism; protoporphyrin-IX biosynthesis; protoporphyrinogen-IX from coproporphyrinogen-III (O2 route): step 1/1. Involved in the heme biosynthesis. Catalyzes the aerobic oxidative decarboxylation of propionate groups of rings A and B of coproporphyrinogen-III to yield the vinyl groups in protoporphyrinogen-IX. The chain is Oxygen-dependent coproporphyrinogen-III oxidase from Aromatoleum aromaticum (strain DSM 19018 / LMG 30748 / EbN1) (Azoarcus sp. (strain EbN1)).